Here is a 145-residue protein sequence, read N- to C-terminus: Transthyretin (145 aa).

Residues 1–20 (MASHRLFLLCLAGLVFMSEA) form the signal peptide. Residue Cys28 is modified to Sulfocysteine. L-thyroxine is bound at residue Lys33. A 4-carboxyglutamate modification is found at Glu60. Ser70 is subject to Phosphoserine. Residue Glu72 coordinates L-thyroxine. Residue Asn116 is glycosylated (N-linked (GlcNAc...) asparagine). Residue Ser135 participates in L-thyroxine binding.

The protein belongs to the transthyretin family. As to quaternary structure, homotetramer. Dimer of dimers. In the homotetramer, subunits assemble around a central channel that can accommodate two ligand molecules. Interacts with RBP4. Sulfonation of the reactive cysteine Cys-28 enhances the stability of the native conformation of TTR, avoiding misassembly of the protein leading to amyloid formation.

The protein resides in the secreted. Thyroid hormone-binding protein. Probably transports thyroxine from the bloodstream to the brain. This is Transthyretin (TTR) from Erinaceus europaeus (Western European hedgehog).